Here is a 165-residue protein sequence, read N- to C-terminus: NAD(P)H-quinone oxidoreductase subunit J, chloroplastic (165 aa).

The protein belongs to the complex I 30 kDa subunit family. NDH is composed of at least 16 different subunits, 5 of which are encoded in the nucleus.

It localises to the plastid. The protein localises to the chloroplast thylakoid membrane. The enzyme catalyses a plastoquinone + NADH + (n+1) H(+)(in) = a plastoquinol + NAD(+) + n H(+)(out). It carries out the reaction a plastoquinone + NADPH + (n+1) H(+)(in) = a plastoquinol + NADP(+) + n H(+)(out). Its function is as follows. NDH shuttles electrons from NAD(P)H:plastoquinone, via FMN and iron-sulfur (Fe-S) centers, to quinones in the photosynthetic chain and possibly in a chloroplast respiratory chain. The immediate electron acceptor for the enzyme in this species is believed to be plastoquinone. Couples the redox reaction to proton translocation, and thus conserves the redox energy in a proton gradient. The polypeptide is NAD(P)H-quinone oxidoreductase subunit J, chloroplastic (Ipomoea purpurea (Common morning glory)).